Consider the following 169-residue polypeptide: Cysteine synthase B (169 aa).

K45 carries the post-translational modification N6-(pyridoxal phosphate)lysine. N75 serves as a coordination point for pyridoxal 5'-phosphate. Positions 146-169 are disordered; that stretch reads ANGDNPEAHYTSTGPEIWRQTGGT.

Belongs to the cysteine synthase/cystathionine beta-synthase family. The cofactor is pyridoxal 5'-phosphate.

It catalyses the reaction O-acetyl-L-serine + hydrogen sulfide = L-cysteine + acetate. It functions in the pathway amino-acid biosynthesis; L-cysteine biosynthesis; L-cysteine from L-serine: step 2/2. In Pseudomonas syringae pv. syringae, this protein is Cysteine synthase B (cysM).